The following is a 449-amino-acid chain: Protein trichome birefringence-like 35 (449 aa).

Residues 12 to 29 traverse the membrane as a helical; Signal-anchor for type II membrane protein segment; sequence LPLAGLLFILVVTFMILF. The GDS motif motif lies at 185-187; that stretch reads GDS. The DCXHWCLPGXXDXWN motif motif lies at 428 to 442; the sequence is DCTHWCVPGVPDVWN.

The protein belongs to the PC-esterase family. TBL subfamily.

It localises to the membrane. May act as a bridging protein that binds pectin and other cell wall polysaccharides. Probably involved in maintaining esterification of pectins. May be involved in the specific O-acetylation of cell wall polymers. The chain is Protein trichome birefringence-like 35 (TBL35) from Arabidopsis thaliana (Mouse-ear cress).